The chain runs to 472 residues: Ribosomal protein uS12 methylthiotransferase RimO (472 aa).

In terms of domain architecture, MTTase N-terminal spans 1-114; it reads MKFHIITLGC…IGDVVDTLQR (114 aa). 6 residues coordinate [4Fe-4S] cluster: Cys-10, Cys-46, Cys-78, Cys-171, Cys-175, and Cys-178. Residues 157 to 388 form the Radical SAM core domain; that stretch reads RITGPSAYLK…MRLQQGISRQ (232 aa). The region spanning 391 to 460 is the TRAM domain; the sequence is RRWVGRVIRV…DYDLWGEMVE (70 aa).

The protein belongs to the methylthiotransferase family. RimO subfamily. [4Fe-4S] cluster serves as cofactor.

It is found in the cytoplasm. The enzyme catalyses L-aspartate(89)-[ribosomal protein uS12]-hydrogen + (sulfur carrier)-SH + AH2 + 2 S-adenosyl-L-methionine = 3-methylsulfanyl-L-aspartate(89)-[ribosomal protein uS12]-hydrogen + (sulfur carrier)-H + 5'-deoxyadenosine + L-methionine + A + S-adenosyl-L-homocysteine + 2 H(+). Catalyzes the methylthiolation of an aspartic acid residue of ribosomal protein uS12. The sequence is that of Ribosomal protein uS12 methylthiotransferase RimO from Roseiflexus sp. (strain RS-1).